Here is a 160-residue protein sequence, read N- to C-terminus: Dysbindin domain-containing protein 1 (160 aa).

3 positions are modified to phosphoserine: Ser3, Ser97, and Ser121. A disordered region spans residues 95–160 (ADSDDENLAT…FLTVEEPKED (66 aa)). Basic and acidic residues predominate over residues 127–143 (TRAEQNREKQPPSDPER).

It belongs to the dysbindin family.

This Mus musculus (Mouse) protein is Dysbindin domain-containing protein 1 (Dbndd1).